We begin with the raw amino-acid sequence, 113 residues long: Large ribosomal subunit protein uL24 (113 aa).

The protein belongs to the universal ribosomal protein uL24 family. In terms of assembly, part of the 50S ribosomal subunit.

Its function is as follows. One of two assembly initiator proteins, it binds directly to the 5'-end of the 23S rRNA, where it nucleates assembly of the 50S subunit. In terms of biological role, one of the proteins that surrounds the polypeptide exit tunnel on the outside of the subunit. This Synechococcus elongatus (strain ATCC 33912 / PCC 7942 / FACHB-805) (Anacystis nidulans R2) protein is Large ribosomal subunit protein uL24.